A 169-amino-acid polypeptide reads, in one-letter code: Disulfide bond formation protein B 1 (169 aa).

Topologically, residues 1-14 (MSDNTLYLRREKRF) are cytoplasmic. Residues 15-31 (LVLLGIICLALIGGALY) traverse the membrane as a helical segment. The Periplasmic portion of the chain corresponds to 32 to 49 (MQVVLDEAPCPLCILQRY). Residues Cys-41 and Cys-44 are joined by a disulfide bond. Residues 50 to 65 (ALLFIAIFAFIGAAMP) form a helical membrane-spanning segment. The Cytoplasmic portion of the chain corresponds to 66–72 (GRRSVTA). The chain crosses the membrane as a helical span at residues 73–89 (FETLVTLSALGGIAAAG). Topologically, residues 90–144 (RHVWILAHPSDSCGIDVLQPIVDGLPLATLFPTGFQVSGFCTTPYPPVLGLSLAQ) are periplasmic. A disulfide bridge connects residues Cys-102 and Cys-130. Residues 145 to 163 (WALTAFVLTAVLVPACIIR) form a helical membrane-spanning segment. Topologically, residues 164 to 169 (NRRKPY) are cytoplasmic.

This sequence belongs to the DsbB family.

It localises to the cell inner membrane. Functionally, required for disulfide bond formation in some periplasmic proteins. Acts by oxidizing the DsbA protein. In Pseudomonas syringae pv. syringae (strain B728a), this protein is Disulfide bond formation protein B 1.